The chain runs to 338 residues: UDP-glucose 4-epimerase (338 aa).

NAD(+) is bound by residues 11-12, 31-36, 58-59, 80-84, Asn99, Ser124, Tyr149, Lys153, and Phe178; these read YI, DNLCNS, DI, and FAGLK. Substrate is bound by residues Ser124 and Tyr149. Tyr149 functions as the Proton acceptor in the catalytic mechanism. Substrate contacts are provided by residues Asn179, 199–200, 216–218, Arg231, 292–295, and Tyr299; these read NL, AIF, and REGD.

Belongs to the NAD(P)-dependent epimerase/dehydratase family. In terms of assembly, homodimer. NAD(+) serves as cofactor.

The catalysed reaction is UDP-alpha-D-glucose = UDP-alpha-D-galactose. The protein operates within carbohydrate metabolism; galactose metabolism. Functionally, involved in the metabolism of galactose. Catalyzes the conversion of UDP-galactose (UDP-Gal) to UDP-glucose (UDP-Glc) through a mechanism involving the transient reduction of NAD. In Yersinia pestis, this protein is UDP-glucose 4-epimerase (galE).